A 259-amino-acid chain; its full sequence is Protein FAM220A (259 aa).

Disordered regions lie at residues 1–44 and 131–154; these read MRDR…ADAP and LGGG…RVSR. The segment covering 138–152 has biased composition (basic and acidic residues); sequence TDGHRGQCPKGEPRV.

In terms of assembly, interacts with transcriptional activator STAT3; the interaction occurs in both the nucleus and the cytoplasm, is enhanced by IL6 and promotes STAT3 dephosphorylation, leading to negative regulation of STAT3 transcriptional activator activity. Can interact with both unphosphorylated and phosphorylated STAT3 but interacts preferentially with phosphorylated STAT3 in the nucleus. Interacts with protein phosphatase PTPN2/TC45; this promotes interaction of PTPN2 with STAT3, leading to dephosphorylation of STAT3 by PTPN2.

The protein localises to the nucleus. It localises to the cytoplasm. Its subcellular location is the cytoplasmic vesicle. The protein resides in the secretory vesicle. It is found in the acrosome. Its function is as follows. Promotes dephosphorylation of transcriptional activator STAT3 by interacting with both STAT3 and protein phosphatase PTPN2. This promotes interaction of PTPN2 with STAT3 and mediates STAT3 dephosphorylation by PTPN2, leading to negative regulation of STAT3 transcriptional activator activity. May be required for spermiogenesis or sperm function. The protein is Protein FAM220A of Homo sapiens (Human).